The primary structure comprises 287 residues: 3-methyl-2-oxobutanoate hydroxymethyltransferase (287 aa).

2 residues coordinate Mg(2+): D67 and D106. 3-methyl-2-oxobutanoate contacts are provided by residues 67–68, D106, and K136; that span reads DS. E138 serves as a coordination point for Mg(2+). Catalysis depends on E204, which acts as the Proton acceptor.

This sequence belongs to the PanB family. In terms of assembly, homodecamer; pentamer of dimers. Requires Mg(2+) as cofactor.

It is found in the cytoplasm. It carries out the reaction 3-methyl-2-oxobutanoate + (6R)-5,10-methylene-5,6,7,8-tetrahydrofolate + H2O = 2-dehydropantoate + (6S)-5,6,7,8-tetrahydrofolate. Its pathway is cofactor biosynthesis; (R)-pantothenate biosynthesis; (R)-pantoate from 3-methyl-2-oxobutanoate: step 1/2. In terms of biological role, catalyzes the reversible reaction in which hydroxymethyl group from 5,10-methylenetetrahydrofolate is transferred onto alpha-ketoisovalerate to form ketopantoate. This Streptomyces avermitilis (strain ATCC 31267 / DSM 46492 / JCM 5070 / NBRC 14893 / NCIMB 12804 / NRRL 8165 / MA-4680) protein is 3-methyl-2-oxobutanoate hydroxymethyltransferase.